Consider the following 2551-residue polypeptide: Piezo-type mechanosensitive ion channel component (2551 aa).

8 consecutive transmembrane segments (helical) span residues 5-25 (YACM…AALM), 27-47 (PVGI…VPLA), 56-76 (VTAF…GHIT), 106-126 (FIDL…LVFA), 204-226 (IHFE…FAAV), 231-250 (VPGG…WATC), 256-276 (GFAL…LSIV), and 320-340 (LSLD…ALAL). Positions 354–375 (STRKARTPQPLESGSSVAPSVT) are disordered. The span at 363–375 (PLESGSSVAPSVT) shows a compositional bias: polar residues. 9 consecutive transmembrane segments (helical) span residues 395 to 415 (TTTS…GFIY), 424 to 444 (ILMM…LLLS), 463 to 483 (PFIV…GMDL), 516 to 536 (VPLI…RQFF), 548 to 568 (LADF…SYLI), 588 to 608 (LLVR…AITG), 611 to 631 (MTGF…VFQS), 639 to 659 (IMYG…ILIY), and 695 to 715 (FLHL…VHYF). The span at 731-741 (GSAQQKPTETT) shows a compositional bias: polar residues. The segment at 731 to 772 (GSAQQKPTETTALEPAPSKRRGSAGSLRKSQGPSAEAAPGAT) is disordered. 12 helical membrane passes run 819-839 (IAAF…FVGF), 857-877 (LISF…IEYL), 910-930 (LMSL…HAVI), 973-993 (LNFG…VSTI), 994-1014 (TYRQ…LLLL), 1022-1042 (IWGV…IVLV), 1071-1091 (GALH…LVIL), 1152-1172 (VLCG…TNIA), 1174-1194 (LLAL…SDFY), 1198-1218 (IHTI…NILI), 1239-1259 (WLVH…QIML), and 1275-1295 (ITHQ…IFQL). Disordered regions lie at residues 1426–1521 (NITE…AKDS) and 1592–1658 (ESDE…PQQQ). The segment covering 1430–1448 (SEMKMQRRKTLYDKSKDAP) has biased composition (basic and acidic residues). Low complexity predominate over residues 1466-1477 (ATASSSASPAPT). Basic and acidic residues predominate over residues 1497 to 1511 (QTSKETSDSKSKMEV). Composition is skewed to low complexity over residues 1621 to 1634 (PTST…TTTP) and 1644 to 1658 (LQPL…PQQQ). 4 consecutive transmembrane segments (helical) span residues 1718-1738 (ISSW…VVFI), 1741-1761 (VVNA…WGTL), 1770-1790 (FWVT…IFQF), and 1817-1837 (AHYA…RYLL). A disordered region spans residues 1854-1876 (FTKPTASIDERDDSDNLSQPDSR). The next 7 membrane-spanning stretches (helical) occupy residues 1937 to 1957 (ALMF…FTAF), 1979 to 1999 (IPFL…RALY), 2008 to 2028 (IIFH…VVPA), 2033 to 2053 (TFNS…YMLL), 2075 to 2095 (FSMV…LYEL), 2151 to 2171 (IMGG…LCLF), and 2431 to 2451 (TFSF…VLLA). A disordered region spans residues 2522–2551 (EYVDDDGDTDSIPSRMSVRRPEQLQPQQPQ).

The protein belongs to the PIEZO (TC 1.A.75) family.

The protein localises to the cell membrane. In terms of biological role, component of a mechanosensitive channel required for rapidly adapting mechanically activated (MA) currents. Plays a major role in nociception (response to strong or painful touch). Required for maintaining the mechanosensitivity of tarsal bristle mechanosensors. During their evalulation of potential egg-laying sites, females determine the softest substrate for their eggs first by making a coarse evaluation of substrate hardness using mechanosensitive channels nan and Piezo in the leg tarsal bristles, followed by a much finer assessment using nan, iav and Tmc mechanosensitive channels on the labellum. Acts in the nompC- and nan-expressing neurons of the female leg tarsals, to sense the mild differences in egg-laying substrate stiffness. This is Piezo-type mechanosensitive ion channel component from Drosophila melanogaster (Fruit fly).